The chain runs to 262 residues: Phosphate import ATP-binding protein PstB (262 aa).

The 242-residue stretch at 16–257 (IDVRNLNFYY…PHRKETEDYI (242 aa)) folds into the ABC transporter domain. Position 48 to 55 (48 to 55 (GPSGCGKS)) interacts with ATP.

The protein belongs to the ABC transporter superfamily. Phosphate importer (TC 3.A.1.7) family. As to quaternary structure, the complex is composed of two ATP-binding proteins (PstB), two transmembrane proteins (PstC and PstA) and a solute-binding protein (PstS).

Its subcellular location is the cell inner membrane. It catalyses the reaction phosphate(out) + ATP + H2O = ADP + 2 phosphate(in) + H(+). Functionally, part of the ABC transporter complex PstSACB involved in phosphate import. Responsible for energy coupling to the transport system. This Cupriavidus metallidurans (strain ATCC 43123 / DSM 2839 / NBRC 102507 / CH34) (Ralstonia metallidurans) protein is Phosphate import ATP-binding protein PstB.